A 248-amino-acid chain; its full sequence is ATP synthase subunit a, chloroplastic (248 aa).

The next 5 membrane-spanning stretches (helical) occupy residues 38 to 58 (QVLLTSWFVLAVLLGLAVLTV), 96 to 116 (VPFIGTLFLFIFVSNWSGALV), 135 to 155 (INTTVALALLTSVAYFYAGLA), 200 to 220 (LVVAVLVSLVPLVVPIPVMLL), and 221 to 241 (GLFTSGIQALIFATLAAAYIG).

The protein belongs to the ATPase A chain family. As to quaternary structure, F-type ATPases have 2 components, CF(1) - the catalytic core - and CF(0) - the membrane proton channel. CF(1) has five subunits: alpha(3), beta(3), gamma(1), delta(1), epsilon(1). CF(0) has four main subunits: a, b, b' and c.

The protein resides in the plastid. The protein localises to the chloroplast thylakoid membrane. Key component of the proton channel; it plays a direct role in the translocation of protons across the membrane. The chain is ATP synthase subunit a, chloroplastic from Welwitschia mirabilis (Tree tumbo).